Here is a 322-residue protein sequence, read N- to C-terminus: Glycerate dehydrogenase (322 aa).

Residues 158 to 159 (SI), aspartate 178, 239 to 241 (TAR), and aspartate 265 each bind NAD(+). Arginine 241 is an active-site residue. Glutamate 270 is an active-site residue. Histidine 288 serves as the catalytic Proton donor. Position 288 to 291 (288 to 291 (HIGS)) interacts with NAD(+).

It belongs to the D-isomer specific 2-hydroxyacid dehydrogenase family. Homodimer.

It carries out the reaction (R)-glycerate + NAD(+) = 3-hydroxypyruvate + NADH + H(+). The protein operates within one-carbon metabolism; formaldehyde assimilation via serine pathway. Functionally, active on hydroxypyruvate and glyoxylate. This Hyphomicrobium methylovorum protein is Glycerate dehydrogenase.